Consider the following 410-residue polypeptide: Diguanylate cyclase DgcM (410 aa).

PAS domains lie at 3 to 70 and 129 to 198; these read THNF…NQHD and GFYA…HLPG. Positions 199-251 constitute a PAC domain; that stretch reads GHKPLNFVHKLADGSTRHVQTYAGPIEIYGDKLMLCIVHDITEQKRLEEQLEH. One can recognise a GGDEF domain in the interval 283–410; sequence QDYSLLLIDT…NDGRNRVLAA (128 aa). Asp-291 lines the Mg(2+) pocket. Residues Asn-299, His-304, and Asp-308 each coordinate substrate. Glu-334 contacts Mg(2+). Glu-334 (proton acceptor) is an active-site residue.

As to quaternary structure, forms homodimers and homotetramers. Interacts with PdeR and MlrA. Mg(2+) serves as cofactor.

It carries out the reaction 2 GTP = 3',3'-c-di-GMP + 2 diphosphate. The protein operates within purine metabolism; 3',5'-cyclic di-GMP biosynthesis. Activity is inhibited by the phosphodiesterase PdeR. Inhibition is relieved by high cellular c-di-GMP levels. Functionally, part of a signaling cascade that regulates curli biosynthesis. The cascade is composed of two cyclic-di-GMP (c-di-GMP) control modules, in which c-di-GMP controlled by the DgcE/PdeH pair (module I) regulates the activity of the DgcM/PdeR pair (module II), which in turn regulates activity of the transcription factor MlrA and expression of the master biofilm regulator csgD. DgcM stimulates activity of MlrA by direct interaction, leading to the transcription of csgD. It also catalyzes the synthesis of c-di-GMP via the condensation of 2 GTP molecules, which contributes to the c-di-GMP pool generated by module I in a positive feedback loop. Production of c-di-GMP contributes to but is not essential for MlrA activation. The chain is Diguanylate cyclase DgcM from Escherichia coli (strain K12).